The chain runs to 313 residues: Small glutamine-rich tetratricopeptide repeat-containing protein alpha (313 aa).

The segment at 69 to 97 (KELPPDLRSPQETPPSEEDSAEAERLKTE) is disordered. Residue Ser-77 is modified to Phosphoserine. Thr-81 is subject to Phosphothreonine. A Phosphoserine modification is found at Ser-84. TPR repeat units lie at residues 91 to 124 (AERLKTEGNEQMKVENFEAAVHFYGKAIELNPAN), 125 to 158 (AVYFCNRAAAYSKLGNYAGAVQDCERAICIDPSY), and 159 to 192 (SKAYGRMGLALSSLNKHTEAVAYYRKALELDPDN). Lys-137 bears the N6-acetyllysine mark. Phosphoserine is present on Ser-301. Residue Thr-303 is modified to Phosphothreonine. Ser-305 bears the Phosphoserine mark.

The protein belongs to the SGT family. Homodimer. Homooligomer. Interacts with DNAJC5 and DNAJC5B. Interacts (via TPR repeats) with HSP90AA1. Interacts (via Gln-rich region) with SLC2A1. Interacts with HSP90AB1. Interacts (via TPR repeats) with HSPA8/Hsc70; the interaction is direct. Interacts with BAG6 (via ubiquitin-like domain); interaction prevents interaction between BAG6 and RNF126. Forms a multiprotein complex, at least composed of DNAJB12, DNAJB14, HSPA8/Hsc70 and SGTA; interaction with DNAJB14 and HSPA8/Hsc70 is direct.

It localises to the cytoplasm. The protein resides in the nucleus. Functionally, co-chaperone that binds misfolded and hydrophobic patches-containing client proteins in the cytosol. Mediates their targeting to the endoplasmic reticulum but also regulates their sorting to the proteasome when targeting fails. Functions in tail-anchored/type II transmembrane proteins membrane insertion constituting with ASNA1 and the BAG6 complex a targeting module. Functions upstream of the BAG6 complex and ASNA1, binding more rapidly the transmembrane domain of newly synthesized proteins. It is also involved in the regulation of the endoplasmic reticulum-associated misfolded protein catabolic process via its interaction with BAG6: collaborates with the BAG6 complex to maintain hydrophobic substrates in non-ubiquitinated states. Competes with RNF126 for interaction with BAG6, preventing the ubiquitination of client proteins associated with the BAG6 complex. Binds directly to HSC70 and HSP70 and regulates their ATPase activity. The polypeptide is Small glutamine-rich tetratricopeptide repeat-containing protein alpha (SGTA) (Bos taurus (Bovine)).